The primary structure comprises 893 residues: TBC domain-containing protein kinase-like protein (893 aa).

Positions 1 to 273 (MFPLKDAEMG…PDELMKDQVF (273 aa)) constitute a Protein kinase domain. A Rab-GAP TBC domain is found at 466 to 651 (DIPPLMRGLT…HLWDTLLLGN (186 aa)).

The protein belongs to the protein kinase superfamily. Component of the FERRY complex composed of five subunits, TBCK, PPP1R21, FERRY3, CRYZL1 and GATD1 with a ratio of 1:2:1:2:4, respectively.

The protein resides in the cytoplasm. It localises to the cytoskeleton. Its subcellular location is the spindle. It is found in the midbody. The protein localises to the early endosome. In terms of biological role, component of the FERRY complex (Five-subunit Endosomal Rab5 and RNA/ribosome intermediary). The FERRY complex directly interacts with mRNAs and RAB5A, and functions as a RAB5A effector involved in the localization and the distribution of specific mRNAs most likely by mediating their endosomal transport. The complex recruits mRNAs and ribosomes to early endosomes through direct mRNA-interaction. Also involved in the modulation of mTOR signaling and expression of mTOR complex components. Involved in the control of actin-cytoskeleton organization. The chain is TBC domain-containing protein kinase-like protein (Tbck) from Mus musculus (Mouse).